The primary structure comprises 157 residues: Protein Smg homolog (157 aa).

The protein belongs to the Smg family.

In Xanthomonas euvesicatoria pv. vesicatoria (strain 85-10) (Xanthomonas campestris pv. vesicatoria), this protein is Protein Smg homolog.